A 550-amino-acid chain; its full sequence is Flagellin (550 aa).

This sequence belongs to the bacterial flagellin family.

Its subcellular location is the secreted. It is found in the bacterial flagellum. Its function is as follows. Flagellin is the subunit protein which polymerizes to form the filaments of bacterial flagella. The protein is Flagellin (fliC) of Shigella flexneri.